A 348-amino-acid chain; its full sequence is S-adenosylmethionine:tRNA ribosyltransferase-isomerase (348 aa).

This sequence belongs to the QueA family. In terms of assembly, monomer.

The protein resides in the cytoplasm. It catalyses the reaction 7-aminomethyl-7-carbaguanosine(34) in tRNA + S-adenosyl-L-methionine = epoxyqueuosine(34) in tRNA + adenine + L-methionine + 2 H(+). Its pathway is tRNA modification; tRNA-queuosine biosynthesis. Functionally, transfers and isomerizes the ribose moiety from AdoMet to the 7-aminomethyl group of 7-deazaguanine (preQ1-tRNA) to give epoxyqueuosine (oQ-tRNA). This chain is S-adenosylmethionine:tRNA ribosyltransferase-isomerase, found in Tolumonas auensis (strain DSM 9187 / NBRC 110442 / TA 4).